The chain runs to 454 residues: Probable xylan O-acetyltransferase 9 (454 aa).

Residues 1-15 (MKAPPPPSPVAKRAR) lie on the Cytoplasmic side of the membrane. A helical; Signal-anchor for type II membrane protein transmembrane segment spans residues 16 to 36 (VSPFVFLLVLFLLLFSFLYGE). Residues 37 to 454 (DLKELLGSQA…ELLYTKLFYP (418 aa)) are Lumenal-facing. 4 disulfide bridges follow: C101-C152, C123-C188, C132-C435, and C352-C431. A GDS motif motif is present at residues 175 to 177 (GDS). S177 (nucleophile) is an active-site residue. 3 N-linked (GlcNAc...) asparagine glycosylation sites follow: N219, N293, and N394. Catalysis depends on D430, which acts as the Proton donor. A DXXH motif motif is present at residues 430–433 (DCVH). H433 acts as the Proton acceptor in catalysis.

This sequence belongs to the PC-esterase family. TBL subfamily.

The protein localises to the golgi apparatus membrane. Probable xylan acetyltransferase required for 2-O- and 3-O-monoacetylation of xylosyl residues in xylan. Possesses extremely low activity in vitro. This is Probable xylan O-acetyltransferase 9 from Oryza sativa subsp. japonica (Rice).